A 227-amino-acid polypeptide reads, in one-letter code: Phosphoribosylformylglycinamidine synthase subunit PurQ (227 aa).

Residues 3 to 225 enclose the Glutamine amidotransferase type-1 domain; the sequence is FAVIVFPGSN…VKQGAHHVKT (223 aa). Catalysis depends on C86, which acts as the Nucleophile. Residues H194 and E196 contribute to the active site.

As to quaternary structure, part of the FGAM synthase complex composed of 1 PurL, 1 PurQ and 2 PurS subunits.

The protein localises to the cytoplasm. It catalyses the reaction N(2)-formyl-N(1)-(5-phospho-beta-D-ribosyl)glycinamide + L-glutamine + ATP + H2O = 2-formamido-N(1)-(5-O-phospho-beta-D-ribosyl)acetamidine + L-glutamate + ADP + phosphate + H(+). The enzyme catalyses L-glutamine + H2O = L-glutamate + NH4(+). It functions in the pathway purine metabolism; IMP biosynthesis via de novo pathway; 5-amino-1-(5-phospho-D-ribosyl)imidazole from N(2)-formyl-N(1)-(5-phospho-D-ribosyl)glycinamide: step 1/2. Functionally, part of the phosphoribosylformylglycinamidine synthase complex involved in the purines biosynthetic pathway. Catalyzes the ATP-dependent conversion of formylglycinamide ribonucleotide (FGAR) and glutamine to yield formylglycinamidine ribonucleotide (FGAM) and glutamate. The FGAM synthase complex is composed of three subunits. PurQ produces an ammonia molecule by converting glutamine to glutamate. PurL transfers the ammonia molecule to FGAR to form FGAM in an ATP-dependent manner. PurS interacts with PurQ and PurL and is thought to assist in the transfer of the ammonia molecule from PurQ to PurL. In Exiguobacterium sibiricum (strain DSM 17290 / CCUG 55495 / CIP 109462 / JCM 13490 / 255-15), this protein is Phosphoribosylformylglycinamidine synthase subunit PurQ.